A 167-amino-acid chain; its full sequence is 6,7-dimethyl-8-ribityllumazine synthase (167 aa).

Residues F24, 58 to 60 (ALE), and 82 to 84 (AVV) contribute to the 5-amino-6-(D-ribitylamino)uracil site. 87-88 (ET) is a (2S)-2-hydroxy-3-oxobutyl phosphate binding site. The active-site Proton donor is the H90. N115 serves as a coordination point for 5-amino-6-(D-ribitylamino)uracil. R129 contacts (2S)-2-hydroxy-3-oxobutyl phosphate.

It belongs to the DMRL synthase family.

It catalyses the reaction (2S)-2-hydroxy-3-oxobutyl phosphate + 5-amino-6-(D-ribitylamino)uracil = 6,7-dimethyl-8-(1-D-ribityl)lumazine + phosphate + 2 H2O + H(+). It participates in cofactor biosynthesis; riboflavin biosynthesis; riboflavin from 2-hydroxy-3-oxobutyl phosphate and 5-amino-6-(D-ribitylamino)uracil: step 1/2. Its function is as follows. Catalyzes the formation of 6,7-dimethyl-8-ribityllumazine by condensation of 5-amino-6-(D-ribitylamino)uracil with 3,4-dihydroxy-2-butanone 4-phosphate. This is the penultimate step in the biosynthesis of riboflavin. The polypeptide is 6,7-dimethyl-8-ribityllumazine synthase (Cupriavidus pinatubonensis (strain JMP 134 / LMG 1197) (Cupriavidus necator (strain JMP 134))).